Reading from the N-terminus, the 79-residue chain is uncharacterized protein (79 aa).

The stretch at 4 to 43 (QENEDLRKQLVEASELLKSQAKELKDAHQQQKLALQDFLE) forms a coiled coil.

This is an uncharacterized protein from Homo sapiens (Human).